Here is a 226-residue protein sequence, read N- to C-terminus: PKHD-type hydroxylase Pput_0892 (226 aa).

Residues 78-178 (KVFPPLINCY…RYAAFFWTQS (101 aa)) form the Fe2OG dioxygenase domain. Fe cation is bound by residues H96, D98, and H159. R169 provides a ligand contact to 2-oxoglutarate.

Requires Fe(2+) as cofactor. It depends on L-ascorbate as a cofactor.

This Pseudomonas putida (strain ATCC 700007 / DSM 6899 / JCM 31910 / BCRC 17059 / LMG 24140 / F1) protein is PKHD-type hydroxylase Pput_0892.